We begin with the raw amino-acid sequence, 466 residues long: Adenosylhomocysteinase (466 aa).

Substrate contacts are provided by Thr57, Asp132, and Glu192. 193 to 195 (TTT) provides a ligand contact to NAD(+). Residues Lys222 and Asp226 each coordinate substrate. Residues Asn227, 256–261 (GYGDVG), Glu279, Asn314, 335–337 (IGH), and Asn380 each bind NAD(+).

Belongs to the adenosylhomocysteinase family. It depends on NAD(+) as a cofactor.

The protein localises to the cytoplasm. The catalysed reaction is S-adenosyl-L-homocysteine + H2O = L-homocysteine + adenosine. It participates in amino-acid biosynthesis; L-homocysteine biosynthesis; L-homocysteine from S-adenosyl-L-homocysteine: step 1/1. Its function is as follows. May play a key role in the regulation of the intracellular concentration of adenosylhomocysteine. The sequence is that of Adenosylhomocysteinase from Brucella anthropi (strain ATCC 49188 / DSM 6882 / CCUG 24695 / JCM 21032 / LMG 3331 / NBRC 15819 / NCTC 12168 / Alc 37) (Ochrobactrum anthropi).